The sequence spans 663 residues: Alcohol oxidase (663 aa).

8 to 39 (DVIVCGGGSTGCVIAGRLANVDENLKVLLIEN) serves as a coordination point for FAD. The active-site Proton acceptor is the His567. The Microbody targeting signal motif lies at 661-663 (ARY).

The protein belongs to the GMC oxidoreductase family. Homooctamer. FAD is required as a cofactor.

It is found in the peroxisome matrix. The enzyme catalyses a primary alcohol + O2 = an aldehyde + H2O2. Its pathway is energy metabolism; methane degradation. In terms of biological role, catalyzes the oxidation of methanol to formaldehyde and hydrogen peroxide, the first step in the methanol utilization pathway of methylotrophic yeasts. This is Alcohol oxidase (AOD1) from Candida boidinii (Yeast).